Reading from the N-terminus, the 86-residue chain is UPF0473 protein Clos_1662 (86 aa).

It belongs to the UPF0473 family.

This Alkaliphilus oremlandii (strain OhILAs) (Clostridium oremlandii (strain OhILAs)) protein is UPF0473 protein Clos_1662.